Here is a 324-residue protein sequence, read N- to C-terminus: Methionyl-tRNA formyltransferase (324 aa).

Residue serine 112–proline 115 participates in (6S)-5,6,7,8-tetrahydrofolate binding.

It belongs to the Fmt family.

The catalysed reaction is L-methionyl-tRNA(fMet) + (6R)-10-formyltetrahydrofolate = N-formyl-L-methionyl-tRNA(fMet) + (6S)-5,6,7,8-tetrahydrofolate + H(+). Functionally, attaches a formyl group to the free amino group of methionyl-tRNA(fMet). The formyl group appears to play a dual role in the initiator identity of N-formylmethionyl-tRNA by promoting its recognition by IF2 and preventing the misappropriation of this tRNA by the elongation apparatus. The polypeptide is Methionyl-tRNA formyltransferase (Shewanella loihica (strain ATCC BAA-1088 / PV-4)).